The following is a 135-amino-acid chain: Ribosome-binding factor A (135 aa).

Belongs to the RbfA family. Monomer. Binds 30S ribosomal subunits, but not 50S ribosomal subunits or 70S ribosomes.

The protein resides in the cytoplasm. Its function is as follows. One of several proteins that assist in the late maturation steps of the functional core of the 30S ribosomal subunit. Associates with free 30S ribosomal subunits (but not with 30S subunits that are part of 70S ribosomes or polysomes). Required for efficient processing of 16S rRNA. May interact with the 5'-terminal helix region of 16S rRNA. The polypeptide is Ribosome-binding factor A (Aliivibrio fischeri (strain MJ11) (Vibrio fischeri)).